The following is a 457-amino-acid chain: tRNA modification GTPase MnmE (457 aa).

Positions 22, 85, and 124 each coordinate (6S)-5-formyl-5,6,7,8-tetrahydrofolate. One can recognise a TrmE-type G domain in the interval 219 to 378; the sequence is GATVVIAGKP…LKEKIYDLVL (160 aa). Asn-229 provides a ligand contact to K(+). GTP contacts are provided by residues 229-234, 248-254, 273-276, and 333-336; these read NTGKSS, TPVPGTT, DTAG, and NKAD. Residue Ser-233 participates in Mg(2+) binding. Positions 248, 250, and 253 each coordinate K(+). Thr-254 is a Mg(2+) binding site. Residue Lys-457 participates in (6S)-5-formyl-5,6,7,8-tetrahydrofolate binding.

This sequence belongs to the TRAFAC class TrmE-Era-EngA-EngB-Septin-like GTPase superfamily. TrmE GTPase family. Homodimer. Heterotetramer of two MnmE and two MnmG subunits. Requires K(+) as cofactor.

The protein resides in the cytoplasm. Functionally, exhibits a very high intrinsic GTPase hydrolysis rate. Involved in the addition of a carboxymethylaminomethyl (cmnm) group at the wobble position (U34) of certain tRNAs, forming tRNA-cmnm(5)s(2)U34. This is tRNA modification GTPase MnmE from Syntrophus aciditrophicus (strain SB).